The following is a 238-amino-acid chain: Ribonuclease PH (238 aa).

Residues Arg-86 and 124–126 each bind phosphate; that span reads GTR.

The protein belongs to the RNase PH family. In terms of assembly, homohexameric ring arranged as a trimer of dimers.

The enzyme catalyses tRNA(n+1) + phosphate = tRNA(n) + a ribonucleoside 5'-diphosphate. In terms of biological role, phosphorolytic 3'-5' exoribonuclease that plays an important role in tRNA 3'-end maturation. Removes nucleotide residues following the 3'-CCA terminus of tRNAs; can also add nucleotides to the ends of RNA molecules by using nucleoside diphosphates as substrates, but this may not be physiologically important. Probably plays a role in initiation of 16S rRNA degradation (leading to ribosome degradation) during starvation. The sequence is that of Ribonuclease PH from Trichlorobacter lovleyi (strain ATCC BAA-1151 / DSM 17278 / SZ) (Geobacter lovleyi).